The following is a 460-amino-acid chain: DL-alanine permease SerP2 (460 aa).

A run of 12 helical transmembrane segments spans residues 26–46 (LIAIAGTIGTGLFLGAGKSIH), 47–67 (LTGPSIIFVYLIIGALMYILL), 98–118 (FIQWSYLLVVVFVAMAELIAI), 124–144 (FWLPDLPIWMTEVFVLVLLTL), 160–180 (FGMIKIVAIIGLILTAIILIF), 209–229 (FFESFQMVMFAFVSMEFIGMT), 246–266 (QIPIRIVLFYIGALLAIMSIY), 278–298 (FVTIFQLIGIKWAAALVNFVV), 344–364 (ALLFTSLLILFTPFISMIPAI), 368–388 (FVFITSVATNLFLVVYLMTLI), 410–430 (HIFIPLAIAGFVLIFISLFCF), and 433–453 (TIIPAIGSVIWVLIFGLFTFF).

It belongs to the amino acid-polyamine-organocation (APC) superfamily. Amino acid transporter (AAT) (TC 2.A.3.1) family.

Its subcellular location is the cell membrane. Functionally, transports DL-alanine, DL-serine and glycine. The preferred substrate is DL-alanine. L-serine is a low-affinity substrate. The protein is DL-alanine permease SerP2 of Lactococcus lactis subsp. cremoris (strain MG1363).